Consider the following 59-residue polypeptide: Lantibiotic lacticin 3147 A1 (59 aa).

The propeptide occupies 1–29 (MNKNEIETQPVTWLEEVSDQNFDEDVFGA). A cross-link (lanthionine (Cys-Ser)) is located at residues 30–31 (CS). Thr-32 and Thr-34 each carry 2,3-didehydrobutyrine. Ser-36 carries the post-translational modification 2,3-didehydroalanine (Ser). The lanthionine (Ser-Cys) cross-link spans 38–48 (SDYWGNNGAWC). 2 consecutive cross-links (beta-methyllanthionine (Thr-Cys)) follow at residues 49 to 54 (TLTHEC) and 51 to 58 (THECMAWC).

Post-translationally, maturation of lantibiotics involves the enzymatic conversion of Thr, and Ser into dehydrated AA and the formation of thioether bonds with cysteine. This is followed by membrane translocation and cleavage of the modified precursor. It is not established whether the 2,3-didehydrobutyrines are the E- or Z-isomers. In the NMR model they were assumed to be the Z-isomer.

The protein localises to the secreted. Its function is as follows. Lanthionine-containing peptide antibiotic (lantibiotic) active on Gram-positive bacteria. The bactericidal activity of lantibiotics is based on depolarization of energized bacterial cytoplasmic membranes, initiated by the formation of aqueous transmembrane pores. When present individually lacticin 3147 A1 exhibits strong activity towards L.lactis strain AM2, weak activity towards L.lactis strain HP and no activity towards L.lactis strain IFPL359, but when combined with lacticin 3147 A2 it displays strong activity towards all three strains. The protein is Lantibiotic lacticin 3147 A1 of Lactococcus lactis subsp. lactis (Streptococcus lactis).